A 601-amino-acid chain; its full sequence is DNA replication licensing factor MCM3 (601 aa).

Residues 180 to 386 (PINLLSKSIA…LDRRLSQHVL (207 aa)) form the MCM domain. 229 to 236 (GDPSTAKS) is a binding site for ATP. The Arginine finger motif lies at 361 to 364 (SRFD).

Belongs to the MCM family. Component of the MCM2-7 complex.

It is found in the nucleus. It localises to the chromosome. Its subcellular location is the nucleoplasm. It catalyses the reaction ATP + H2O = ADP + phosphate + H(+). Functionally, acts as a component of the MCM2-7 complex (MCM complex) which is the replicative helicase essential for DNA replication initiation and elongation in eukaryotic cells. Required for DNA replication and cell proliferation. The active ATPase sites in the MCM2-7 ring are formed through the interaction surfaces of two neighboring subunits such that a critical structure of a conserved arginine finger motif is provided in trans relative to the ATP-binding site of the Walker A box of the adjacent subunit. In Entamoeba histolytica (strain ATCC 30459 / HM-1:IMSS / ABRM), this protein is DNA replication licensing factor MCM3.